Here is a 132-residue protein sequence, read N- to C-terminus: Tyrosine phosphatase-like protein N2 (132 aa).

The region spanning 1–132 (MQGPMKNTVA…DILGRFQRVF (132 aa)) is the Tyrosine-protein phosphatase domain.

It belongs to the protein-tyrosine phosphatase family.

This is Tyrosine phosphatase-like protein N2 (N4) from Microplitis demolitor (Parasitoid wasp).